A 94-amino-acid chain; its full sequence is Protein RESPONSE TO LOW SULFUR 1 (94 aa).

A coiled-coil region spans residues 8 to 35 (VTVAAEEMDELRRRNIELSREVAEMKTE).

The chain is Protein RESPONSE TO LOW SULFUR 1 from Arabidopsis thaliana (Mouse-ear cress).